A 194-amino-acid chain; its full sequence is MDFEQLLDKSLNKVREEIKTELSKSLDEAIKLLNEGHNKIVQEYSQRINELIVKTKEEIEGEKARLEVENKRTLLVEKEYWINKVYERVLGKIGEVVKTKEYKDAIENIISKEIKEIREEKVTIYCSPNDKLMIEKIVGNNKNVTVKTDEKMLGGIKIYFERSGLTRDFSLKLILDQVFDSMRGKISDMLFGGK.

This sequence belongs to the V-ATPase E subunit family. Has multiple subunits with at least A(3), B(3), C, D, E, F, H, I and proteolipid K(x).

The protein localises to the cell membrane. In terms of biological role, component of the A-type ATP synthase that produces ATP from ADP in the presence of a proton gradient across the membrane. The sequence is that of A-type ATP synthase subunit E from Saccharolobus solfataricus (strain ATCC 35092 / DSM 1617 / JCM 11322 / P2) (Sulfolobus solfataricus).